A 38-amino-acid chain; its full sequence is Large ribosomal subunit protein bL36 (38 aa).

This sequence belongs to the bacterial ribosomal protein bL36 family.

The protein is Large ribosomal subunit protein bL36 of Pseudomonas entomophila (strain L48).